The primary structure comprises 673 residues: DNA ligase (673 aa).

Residues 35–39 (DADYD), 84–85 (SL), and glutamate 115 contribute to the NAD(+) site. Catalysis depends on lysine 117, which acts as the N6-AMP-lysine intermediate. 4 residues coordinate NAD(+): arginine 138, glutamate 180, lysine 296, and lysine 320. Residues cysteine 415, cysteine 418, cysteine 433, and cysteine 438 each coordinate Zn(2+). The BRCT domain occupies 595–673 (ERGTALAGQT…EDALKKLLGK (79 aa)).

Belongs to the NAD-dependent DNA ligase family. LigA subfamily. Mg(2+) is required as a cofactor. Mn(2+) serves as cofactor.

It catalyses the reaction NAD(+) + (deoxyribonucleotide)n-3'-hydroxyl + 5'-phospho-(deoxyribonucleotide)m = (deoxyribonucleotide)n+m + AMP + beta-nicotinamide D-nucleotide.. DNA ligase that catalyzes the formation of phosphodiester linkages between 5'-phosphoryl and 3'-hydroxyl groups in double-stranded DNA using NAD as a coenzyme and as the energy source for the reaction. It is essential for DNA replication and repair of damaged DNA. The polypeptide is DNA ligase (Koribacter versatilis (strain Ellin345)).